An 804-amino-acid chain; its full sequence is Exocyst complex component 6 (804 aa).

It belongs to the SEC15 family. The exocyst complex is composed of EXOC1, EXOC2, EXOC3, EXOC4, EXOC5, EXOC6, EXOC7 and EXOC8. Interacts with CNTRL. Interacts with RAB11A in a GTP-dependent manner.

The protein localises to the cytoplasm. It localises to the perinuclear region. Its subcellular location is the cell projection. It is found in the growth cone. The protein resides in the midbody. The protein localises to the midbody ring. Functionally, component of the exocyst complex involved in the docking of exocytic vesicles with fusion sites on the plasma membrane. Together with RAB11A, RAB3IP, RAB8A, PARD3, PRKCI, ANXA2, CDC42 and DNMBP promotes transcytosis of PODXL to the apical membrane initiation sites (AMIS), apical surface formation and lumenogenesis. This is Exocyst complex component 6 (Exoc6) from Rattus norvegicus (Rat).